The chain runs to 103 residues: Putative RNA-binding protein RbpB (103 aa).

The RRM domain occupies 2-79 (SIYVGNLSYD…RDLKVNKAKP (78 aa)). The segment covering 74 to 85 (VNKAKPREDRGG) has biased composition (basic and acidic residues). Residues 74-103 (VNKAKPREDRGGSRGSFGGNRSNNNFRNRY) form a disordered region. Over residues 92-103 (GNRSNNNFRNRY) the composition is skewed to low complexity.

This Nostoc sp. (strain PCC 7120 / SAG 25.82 / UTEX 2576) protein is Putative RNA-binding protein RbpB (rbpB).